Reading from the N-terminus, the 623-residue chain is DELLA protein RHT-1 (623 aa).

Residues 1 to 27 (MKREYQDAGGSGGGGGGMGSSEDKMMV) are disordered. Residues 9 to 19 (GGSGGGGGGMG) are compositionally biased toward gly residues. Positions 38–42 (DELLA) match the DELLA motif motif. 2 disordered regions span residues 109-138 (LNAPPPPLPPAPQLNASTSSTVTGSGGYFD) and 159-201 (AGAT…GARS). Positions 111-120 (APPPPLPPAP) are enriched in pro residues. Composition is skewed to low complexity over residues 121 to 131 (QLNASTSSTVT) and 181 to 201 (GGSSTSSSSSSSSSLGGGARS). One can recognise a GRAS domain in the interval 225 to 619 (VDTQEAGIRL…RPLIATSAWR (395 aa)). Residues 232 to 288 (IRLVHALLACAEAVQQENLSAAEALVKQIPLLAASQGGAMRKVAAYFGEALARRVFR) form a leucine repeat I (LRI) region. Positions 239–243 (LACAE) match the LxCxE motif motif. Residues 307–372 (HAHFYESCPY…GGPPSFRLTG (66 aa)) form a VHIID region. Residues 338-342 (VHVVD) carry the VHIID motif. Positions 386–425 (QVGWKLAQFAHTIRVDFQYRGLVAATLADLEPFMLQPEGE) are leucine repeat II (LRII). Positions 435–540 (IAVNSVFEMH…EVYLGRQICN (106 aa)) are PFYRE. Positions 543-619 (ACEGAERTER…RPLIATSAWR (77 aa)) are SAW.

It belongs to the GRAS family. DELLA subfamily. In terms of processing, phosphorylated. Post-translationally, ubiquitinated. Upon GA application it is ubiquitinated, leading to its subsequent degradation.

The protein resides in the nucleus. Probable transcriptional regulator that acts as a repressor of the gibberellin (GA) signaling pathway. Probably acts by participating in large multiprotein complexes that repress transcription of GA-inducible genes. Upon GA application, it is degraded by the proteasome, allowing the GA signaling pathway. This is DELLA protein RHT-1 (RHT1) from Triticum aestivum (Wheat).